Reading from the N-terminus, the 166-residue chain is Large ribosomal subunit protein uL11 (166 aa).

It belongs to the universal ribosomal protein uL11 family. As to quaternary structure, part of the ribosomal stalk of the 50S ribosomal subunit. Interacts with L10 and the large rRNA to form the base of the stalk. L10 forms an elongated spine to which L12 dimers bind in a sequential fashion forming a multimeric L10(L12)X complex.

Functionally, forms part of the ribosomal stalk which helps the ribosome interact with GTP-bound translation factors. The polypeptide is Large ribosomal subunit protein uL11 (Methanopyrus kandleri (strain AV19 / DSM 6324 / JCM 9639 / NBRC 100938)).